The sequence spans 561 residues: MIRAQQELLVALGDALAELAPEQPPIAAFESPKQAAHGDLAITSAMQLAKPLKRNPRELAQALIDALQRREAVQRWVAALEIAGPGFINLRLKDTTKQQIVAEVLASGTDFGRQPATSERALVEFVSANPTGPLHVGHGRQAALGDAICKLFETQGWQVTREFYYNDAGVQIGTLAASTQARLQGLKPGDAGWPESAYNGDYIADIAADFLARKTVKADDREFTASGDPADLDGIRQFAVAYLRHEQDLDLQAFGVRFDHYFLESSLYATGRVEATVGKLVAAGKTFEDGGALWLRTTDYGDDKDRVMKKSDGSYTYFVPDVAYHVNKWERGYHKVINIQGSDHHGTIARVRAGLQAADVGIPAGYPDYVLHKMVTVMRGGEEVKISKRAGSYVTLRDLIDWTGKDAVRFFLISRKADTEFVFDVDLALKKNDENPVYYVQYAHARICSVIVQWREQQAGDPATLAQADLARLVAPTEAALMLKLAAYPVMLSGAAESLAPHDVAFYLRDLAGAFHSYYAAERFLTDDPALSRARLALLAATAQVLRNGLAVLGVSAPDRM.

Positions 128–138 (ANPTGPLHVGH) match the 'HIGH' region motif.

The protein belongs to the class-I aminoacyl-tRNA synthetase family. In terms of assembly, monomer.

Its subcellular location is the cytoplasm. It catalyses the reaction tRNA(Arg) + L-arginine + ATP = L-arginyl-tRNA(Arg) + AMP + diphosphate. The chain is Arginine--tRNA ligase from Methylibium petroleiphilum (strain ATCC BAA-1232 / LMG 22953 / PM1).